Reading from the N-terminus, the 623-residue chain is Adenine deaminase 2 (623 aa).

The protein belongs to the metallo-dependent hydrolases superfamily. Adenine deaminase family. The cofactor is Mn(2+).

The catalysed reaction is adenine + H2O + H(+) = hypoxanthine + NH4(+). The chain is Adenine deaminase 2 from Jannaschia sp. (strain CCS1).